The primary structure comprises 33 residues: VSTSRGSQGCFGLKLDRIGAASGLGCWRRIVDS.

A disulfide bridge connects residues cysteine 10 and cysteine 26.

As to expression, expressed by the venom gland.

It localises to the secreted. Snake venom natriuretic peptide that shows an increase in perfusion pressure, urinary flow and glomerular filtration rate. Reduces total and proximal tubular transport of sodium. In the aortic ring assay, causes a relaxant effect in endothelium-intact thoracic aortic rings precontracted with phenylephrine in the presence and absence of isatin, a natriuretic receptor antagonist. The polypeptide is Natriuretic peptide NP2 (Crotalus durissus cascavella (Northeastern Brazilian rattlesnake)).